The primary structure comprises 418 residues: Tyrosine--tRNA ligase (418 aa).

Tyr34 is a binding site for L-tyrosine. Positions 39–48 match the 'HIGH' region motif; that stretch reads PTADSLHLGH. Residues Tyr169 and Gln173 each coordinate L-tyrosine. The 'KMSKS' region signature appears at 229–233; the sequence is KFGKS. Residue Lys232 coordinates ATP. Positions 352–418 constitute an S4 RNA-binding domain; it reads LNIVEILVSS…GKKKYAVLTY (67 aa).

Belongs to the class-I aminoacyl-tRNA synthetase family. TyrS type 1 subfamily. Homodimer.

The protein resides in the cytoplasm. It catalyses the reaction tRNA(Tyr) + L-tyrosine + ATP = L-tyrosyl-tRNA(Tyr) + AMP + diphosphate + H(+). In terms of biological role, catalyzes the attachment of tyrosine to tRNA(Tyr) in a two-step reaction: tyrosine is first activated by ATP to form Tyr-AMP and then transferred to the acceptor end of tRNA(Tyr). The chain is Tyrosine--tRNA ligase from Streptococcus uberis (strain ATCC BAA-854 / 0140J).